The primary structure comprises 161 residues: Allophycocyanin alpha chain (161 aa).

Asparagine 71 carries the post-translational modification N4-methylasparagine. Cysteine 81 lines the (2R,3E)-phycocyanobilin pocket.

It belongs to the phycobiliprotein family. In terms of assembly, heterodimer of an alpha and a beta chain. In terms of processing, contains one covalently linked phycocyanobilin chromophore.

It is found in the plastid. Its subcellular location is the chloroplast thylakoid membrane. Its function is as follows. Light-harvesting photosynthetic bile pigment-protein from the phycobiliprotein complex. Allophycocyanin has a maximum absorption at approximately 650 nanometers. The chain is Allophycocyanin alpha chain (apcA) from Aglaothamnion neglectum (Red alga).